Here is a 107-residue protein sequence, read N- to C-terminus: Large ribosomal subunit protein P2 (107 aa).

Over residues 63–83 the composition is skewed to low complexity; it reads SSVPSGGSAPAAAAPSGGAAP. The tract at residues 63-107 is disordered; the sequence is SSVPSGGSAPAAAAPSGGAAPKAEEKKKEEPKEESDDDMGFGLFD. The span at 84 to 93 shows a compositional bias: basic and acidic residues; sequence KAEEKKKEEP.

The protein belongs to the eukaryotic ribosomal protein P1/P2 family. As to quaternary structure, P1 and P2 exist as dimers at the large ribosomal subunit. Phosphorylated.

Functionally, plays an important role in the elongation step of protein synthesis. This Caenorhabditis elegans protein is Large ribosomal subunit protein P2.